A 152-amino-acid chain; its full sequence is SXP/RAL-2 family protein Ani s 5 (152 aa).

Residues 1–18 (MKTLIVAALFCTIGMALA) form the signal peptide. Necessary for IgE-binding regions lie at residues 25-42 (PPFLAGAPQDVVKAFFEL), 49-54 (KTDPEI), 58-66 (LDAWVDTLG), and 103-120 (KKADAELSKIAEDDSLNG). IgG4-binding regions lie at residues 49 to 68 (KTDPEIEKDLDAWVDTLGGD) and 118 to 137 (LNGIQKAQKIQAIYKTLPQS). The segment at 127 to 146 (IQAIYKTLPQSVKDELEKGI) is igE-binding and IgG4-binding.

Belongs to the SXP/RAL-2 family. In terms of assembly, monomer. Excretory gland, ventriculus, and the luminal epithelium of the intestine of the larvae.

The protein resides in the secreted. This is SXP/RAL-2 family protein Ani s 5 from Anisakis simplex (Herring worm).